Consider the following 331-residue polypeptide: NAD-dependent protein deacetylase HST2 (331 aa).

The region spanning 1–262 is the Deacetylase sirtuin-type domain; it reads MPSLDDILKP…EKLCTLLGLD (262 aa). Residues 26-46 and 109-112 contribute to the NAD(+) site; these read GAGI…TGLY and QNID. H129 acts as the Proton acceptor in catalysis. The Zn(2+) site is built by C137, C140, C161, and C164. NAD(+) contacts are provided by residues 201 to 203, 226 to 228, and C248; these read GTS and NKE. Residues 276–331 are a coiled coil; that stretch reads YSKAETKETKMHEIEDKLKEEAHLKEDKHTTKVDKKEKQNDANDKELEQLIDKLKI. Residues 283–319 are disordered; it reads ETKMHEIEDKLKEEAHLKEDKHTTKVDKKEKQNDAND.

This sequence belongs to the sirtuin family. Class I subfamily. Zn(2+) is required as a cofactor.

Its subcellular location is the cytoplasm. The protein localises to the nucleus. The enzyme catalyses N(6)-acetyl-L-lysyl-[protein] + NAD(+) + H2O = 2''-O-acetyl-ADP-D-ribose + nicotinamide + L-lysyl-[protein]. NAD-dependent histone deacetylase that is involved in nuclear silencing events. Derepresses subtelomeric silencing and increases repression in nucleolar (rDNA) silencing. Its function is negatively regulated by active nuclear export. This is NAD-dependent protein deacetylase HST2 (HST2) from Candida albicans (strain SC5314 / ATCC MYA-2876) (Yeast).